The following is a 547-amino-acid chain: Serine/threonine-protein kinase pkn3 (547 aa).

The Protein kinase domain occupies tyrosine 18–valine 288. ATP-binding positions include isoleucine 24–valine 32 and lysine 47. The Proton acceptor role is filled by aspartate 142. Residues lysine 290 to proline 299 are compositionally biased toward basic and acidic residues. The tract at residues lysine 290–alanine 327 is disordered.

The protein belongs to the protein kinase superfamily. Ser/Thr protein kinase family.

The catalysed reaction is L-seryl-[protein] + ATP = O-phospho-L-seryl-[protein] + ADP + H(+). The enzyme catalyses L-threonyl-[protein] + ATP = O-phospho-L-threonyl-[protein] + ADP + H(+). The polypeptide is Serine/threonine-protein kinase pkn3 (pkn3) (Myxococcus xanthus).